Consider the following 307-residue polypeptide: Chlorophyll a-b binding protein 1, chloroplastic (307 aa).

The N-terminal 44 residues, 1 to 44 (MAPYSVVASVLAAAPPQQSGSVRQLPSTINRAITQRSQSRHVAS), are a transit peptide targeting the chloroplast. The segment at 34-54 (TQRSQSRHVASASSASSPTTM) is disordered. 11 residues coordinate chlorophyll a: threonine 52, glutamate 63, isoleucine 64, glycine 65, tyrosine 68, leucine 81, proline 86, arginine 89, glycine 90, phenylalanine 91, and aspartate 92. Position 96 (leucine 96) interacts with loroxanthin. Residues 111–143 (NYDESRLRWLLEGELYNGRLAMLAVVGVLTVEA) form a helical membrane-spanning segment. Residues leucine 120, glutamate 124, asparagine 127, methionine 132, and lysine 146 each contribute to the chlorophyll a site. Position 149 (tryptophan 149) interacts with loroxanthin. 8 residues coordinate chlorophyll a: glutamate 151, tyrosine 163, histidine 171, glutamate 178, arginine 181, glutamate 190, arginine 198, and aspartate 200. The helical transmembrane segment at 161-186 (TPYVVAVVGGHLAFALLEKKRLENFR) threads the bilayer. All-trans-violaxanthin contacts are provided by aspartate 200 and leucine 202. Chlorophyll a-binding residues include leucine 204, asparagine 208, tyrosine 214, asparagine 215, alanine 218, asparagine 222, and arginine 224. The chain crosses the membrane as a helical span at residues 213–238 (DYNRQAEVRNCRLAMLTFLGFSVQAW). Phenylalanine 230 is a loroxanthin binding site. Phenylalanine 233 contacts all-trans-violaxanthin. Glutamine 236 lines the chlorophyll a pocket. Proline 244 lines the all-trans-violaxanthin pocket. Residues asparagine 247, histidine 251, proline 255, phenylalanine 256, alanine 258, asparagine 259, isoleucine 260, and phenylalanine 274 each contribute to the chlorophyll a site. The chain crosses the membrane as a helical span at residues 265–289 (DRGTNVVAIFSAFAAVMHIAELARE).

This sequence belongs to the light-harvesting chlorophyll a/b-binding (LHC) protein family. As to quaternary structure, homooligomer. Component of a light-harvesting complex (LHC) consisting of 11 chlorophyll a-b binding proteins. Binds 11 chlorophylls (Chl-a and Chl-b) and the 2 carotenoids violaxanthin and loroxanthin. is required as a cofactor.

It is found in the plastid. Its subcellular location is the chloroplast thylakoid membrane. Component of a light-harvesting complex (LHC). The LHC functions as a light receptor, it captures and delivers excitation energy to photosystems with which it is closely associated. Functions in a far-red LHC by absorbing far-red light and promoting photosystem II (PSII) excitation, likely with entropy-driven uphill excitation energy transfer. Exhibits a typical absorption band at 671 nm (Qy band), as well as a large far-red absorption band at 706.5 together with fluorescence emission at around 713 nm (F713). In Prasiola crispa (Green alga), this protein is Chlorophyll a-b binding protein 1, chloroplastic.